Reading from the N-terminus, the 1406-residue chain is DNA topoisomerase 2 (1406 aa).

ATP is bound by residues N69, N98, 126 to 128 (SSN), and 139 to 146 (GRNGYGAK). An interaction with DNA region spans residues 332–334 (KKK). 363–365 (QTK) is a binding site for ATP. In terms of domain architecture, Toprim spans 441–555 (CTLILTEGDS…GLLDIPGFLI (115 aa)). Residues E447, D524, and D526 each contribute to the Mg(2+) site. In terms of domain architecture, Topo IIA-type catalytic spans 690–1159 (IPSVLDGFKP…SAKDLWNNDL (470 aa)). Y780 (O-(5'-phospho-DNA)-tyrosine intermediate) is an active-site residue. An interaction with DNA region spans residues 963-972 (KLISPISLQN). The segment covering 1079–1089 (EDEDEDLEESE) has biased composition (acidic residues). Disordered stretches follow at residues 1079-1106 (EDED…VNGP), 1183-1215 (KTKG…KKIK), 1230-1287 (KIKA…DESG), and 1303-1406 (DEDA…FNDE). Residues 1090 to 1100 (EATRKKDKDDE) show a composition bias toward basic and acidic residues. A compositionally biased stretch (basic residues) spans 1204–1214 (KKKPARRIKKI). Polar residues predominate over residues 1261 to 1274 (DVTSNASTPSTTIF). Basic residues predominate over residues 1326-1336 (AKKKAPPKRKA). Acidic residues-rich tracts occupy residues 1341-1359 (SSED…DEEV) and 1381-1406 (EISD…FNDE).

It belongs to the type II topoisomerase family. In terms of assembly, homodimer. Mg(2+) serves as cofactor. Mn(2+) is required as a cofactor. Requires Ca(2+) as cofactor.

Its subcellular location is the nucleus. The catalysed reaction is ATP-dependent breakage, passage and rejoining of double-stranded DNA.. In terms of biological role, control of topological states of DNA by transient breakage and subsequent rejoining of DNA strands. Topoisomerase II makes double-strand breaks. The chain is DNA topoisomerase 2 (TOP2) from Candida glabrata (strain ATCC 2001 / BCRC 20586 / JCM 3761 / NBRC 0622 / NRRL Y-65 / CBS 138) (Yeast).